A 264-amino-acid chain; its full sequence is tRNA (guanine-N(1)-)-methyltransferase (264 aa).

S-adenosyl-L-methionine contacts are provided by residues Gly-113 and 133 to 138 (IGDYVL). Residues 244–264 (VQQAATPGGQRRPPWHRDSRA) form a disordered region.

It belongs to the RNA methyltransferase TrmD family. Homodimer.

It localises to the cytoplasm. It catalyses the reaction guanosine(37) in tRNA + S-adenosyl-L-methionine = N(1)-methylguanosine(37) in tRNA + S-adenosyl-L-homocysteine + H(+). Functionally, specifically methylates guanosine-37 in various tRNAs. The chain is tRNA (guanine-N(1)-)-methyltransferase from Frankia alni (strain DSM 45986 / CECT 9034 / ACN14a).